A 337-amino-acid chain; its full sequence is Serpentine receptor class beta-6 (337 aa).

7 helical membrane-spanning segments follow: residues 20 to 40 (QFYT…LIIF), 62 to 82 (ILIS…IPFL), 98 to 118 (IFQN…LGIT), 138 to 158 (IGVF…YFFF), 183 to 203 (WLCY…YFLV), 234 to 254 (TFIS…TLII), and 273 to 293 (GVYI…CVIL).

The protein belongs to the nematode receptor-like protein srb family. In terms of tissue distribution, expressed in the ADL, ADF and ASH chemosensory neurons in the head and in the PHA and PHB chemosensory neurons in the tail. Low expression also observed in the egg-laying structures in the mid-body region.

The protein localises to the cell membrane. In terms of biological role, mediates recognition and avoidance of Streptomyces species by detecting dodecanoic acid secreted by the bacteria. Also mediates avoidance of decanoic acid which is not secreted by Streptomyces species but this may represent an additional important avoidance response in the environment. The sequence is that of Serpentine receptor class beta-6 (srb-6) from Caenorhabditis elegans.